We begin with the raw amino-acid sequence, 113 residues long: Putative pterin-4-alpha-carbinolamine dehydratase (113 aa).

Belongs to the pterin-4-alpha-carbinolamine dehydratase family.

The catalysed reaction is (4aS,6R)-4a-hydroxy-L-erythro-5,6,7,8-tetrahydrobiopterin = (6R)-L-erythro-6,7-dihydrobiopterin + H2O. This chain is Putative pterin-4-alpha-carbinolamine dehydratase, found in Nitrosomonas eutropha (strain DSM 101675 / C91 / Nm57).